The sequence spans 391 residues: 3-ketoacyl-CoA thiolase (391 aa).

The Acyl-thioester intermediate role is filled by Cys95. Catalysis depends on proton acceptor residues His347 and Cys377.

The protein belongs to the thiolase-like superfamily. Thiolase family. Heterotetramer of two alpha chains (FadB) and two beta chains (FadA).

It localises to the cytoplasm. It catalyses the reaction an acyl-CoA + acetyl-CoA = a 3-oxoacyl-CoA + CoA. Its pathway is lipid metabolism; fatty acid beta-oxidation. Functionally, catalyzes the final step of fatty acid oxidation in which acetyl-CoA is released and the CoA ester of a fatty acid two carbons shorter is formed. This Ectopseudomonas mendocina (strain ymp) (Pseudomonas mendocina) protein is 3-ketoacyl-CoA thiolase.